We begin with the raw amino-acid sequence, 143 residues long: Large-conductance mechanosensitive channel (143 aa).

The next 2 membrane-spanning stretches (helical) occupy residues 10-30 (FAVK…GAFS) and 89-109 (GSFI…FLMV).

It belongs to the MscL family. As to quaternary structure, homopentamer.

The protein localises to the cell inner membrane. Its function is as follows. Channel that opens in response to stretch forces in the membrane lipid bilayer. May participate in the regulation of osmotic pressure changes within the cell. The protein is Large-conductance mechanosensitive channel of Burkholderia multivorans (strain ATCC 17616 / 249).